The following is a 325-amino-acid chain: Acetyl-coenzyme A carboxylase carboxyl transferase subunit alpha (325 aa).

The CoA carboxyltransferase C-terminal domain maps to 43 to 297 (ELENNSTQLR…KTSLIAHLRQ (255 aa)).

This sequence belongs to the AccA family. In terms of assembly, acetyl-CoA carboxylase is a heterohexamer composed of biotin carboxyl carrier protein (AccB), biotin carboxylase (AccC) and two subunits each of ACCase subunit alpha (AccA) and ACCase subunit beta (AccD).

It is found in the cytoplasm. It carries out the reaction N(6)-carboxybiotinyl-L-lysyl-[protein] + acetyl-CoA = N(6)-biotinyl-L-lysyl-[protein] + malonyl-CoA. It functions in the pathway lipid metabolism; malonyl-CoA biosynthesis; malonyl-CoA from acetyl-CoA: step 1/1. Component of the acetyl coenzyme A carboxylase (ACC) complex. First, biotin carboxylase catalyzes the carboxylation of biotin on its carrier protein (BCCP) and then the CO(2) group is transferred by the carboxyltransferase to acetyl-CoA to form malonyl-CoA. This chain is Acetyl-coenzyme A carboxylase carboxyl transferase subunit alpha, found in Cyanothece sp. (strain PCC 7425 / ATCC 29141).